Here is a 364-residue protein sequence, read N- to C-terminus: tRNA-specific 2-thiouridylase MnmA (364 aa).

ATP contacts are provided by residues 13–20 (GMSGGVDS) and Met39. Positions 99–101 (NPD) are interaction with target base in tRNA. Catalysis depends on Cys104, which acts as the Nucleophile. An intrachain disulfide couples Cys104 to Cys199. Residue Gly128 coordinates ATP. Positions 149–151 (KDQ) are interaction with tRNA. Residue Cys199 is the Cysteine persulfide intermediate of the active site. The segment at 311-312 (RY) is interaction with tRNA.

Belongs to the MnmA/TRMU family.

The protein resides in the cytoplasm. The catalysed reaction is S-sulfanyl-L-cysteinyl-[protein] + uridine(34) in tRNA + AH2 + ATP = 2-thiouridine(34) in tRNA + L-cysteinyl-[protein] + A + AMP + diphosphate + H(+). Functionally, catalyzes the 2-thiolation of uridine at the wobble position (U34) of tRNA, leading to the formation of s(2)U34. The chain is tRNA-specific 2-thiouridylase MnmA from Alcanivorax borkumensis (strain ATCC 700651 / DSM 11573 / NCIMB 13689 / SK2).